We begin with the raw amino-acid sequence, 165 residues long: Myosin regulatory light chain 2B, cardiac muscle isoform (165 aa).

Residue alanine 2 is modified to N,N,N-trimethylalanine. 3 EF-hand domains span residues 23–58 (TQIQ…LGRL), 93–128 (DPEE…QEGR), and 129–164 (FSQE…GEEK). Residues aspartate 36, asparagine 38, aspartate 40, and aspartate 47 each contribute to the Ca(2+) site.

Myosin is a hexamer of 2 heavy chains and 4 light chains. Post-translationally, the N-terminus is blocked. N,N,N-trimethylalanine, found in other myosin light chains would not have been detected in the N-terminal tryptic peptide in PubMed:7319048 because it would remain trimethylated and ninhydrin negative after hydrolysis.

In Gallus gallus (Chicken), this protein is Myosin regulatory light chain 2B, cardiac muscle isoform.